Consider the following 309-residue polypeptide: Mitochondrial import receptor subunit TOM34 (309 aa).

Serine 8 bears the Phosphoserine mark. TPR repeat units lie at residues 9–42, 51–84, and 86–118; these read VEQL…LQAR, SVLY…VPFS, and KPLL…DNSV. The interval 158 to 187 is disordered; that stretch reads WSSLPSENHKETAKSKSKETTATKNRVPSA. At serine 160 the chain carries Phosphoserine. A compositionally biased stretch (basic and acidic residues) spans 164–178; sequence ENHKETAKSKSKETT. Serine 186 carries the phosphoserine modification. TPR repeat units lie at residues 193–226, 227–260, and 262–294; these read ARVL…SSLE, SATY…DGKN, and KAFY…EPRN. A Glycyl lysine isopeptide (Lys-Gly) (interchain with G-Cter in SUMO2) cross-link involves residue lysine 197.

Belongs to the Tom34 family. Interacts with HSP90A, VCP, ATP6V1D, KIAA0665, AMPK, and DMAP1 through its TPR repeat.

It is found in the cytoplasm. The protein localises to the mitochondrion outer membrane. In terms of biological role, plays a role in the import of cytosolically synthesized preproteins into mitochondria. Binds the mature portion of precursor proteins. Interacts with cellular components, and possesses weak ATPase activity. May be a chaperone-like protein that helps to keep newly synthesized precursors in an unfolded import compatible state. This is Mitochondrial import receptor subunit TOM34 (Tomm34) from Rattus norvegicus (Rat).